We begin with the raw amino-acid sequence, 227 residues long: Thiamine-phosphate synthase (227 aa).

Residues 46 to 50 (QLRDK) and asparagine 87 each bind 4-amino-2-methyl-5-(diphosphooxymethyl)pyrimidine. Aspartate 88 and aspartate 107 together coordinate Mg(2+). Serine 126 is a binding site for 4-amino-2-methyl-5-(diphosphooxymethyl)pyrimidine. Residue 152–154 (TPT) participates in 2-[(2R,5Z)-2-carboxy-4-methylthiazol-5(2H)-ylidene]ethyl phosphate binding. Lysine 155 contributes to the 4-amino-2-methyl-5-(diphosphooxymethyl)pyrimidine binding site. Glycine 183 contacts 2-[(2R,5Z)-2-carboxy-4-methylthiazol-5(2H)-ylidene]ethyl phosphate.

Belongs to the thiamine-phosphate synthase family. Mg(2+) is required as a cofactor.

The catalysed reaction is 2-[(2R,5Z)-2-carboxy-4-methylthiazol-5(2H)-ylidene]ethyl phosphate + 4-amino-2-methyl-5-(diphosphooxymethyl)pyrimidine + 2 H(+) = thiamine phosphate + CO2 + diphosphate. It catalyses the reaction 2-(2-carboxy-4-methylthiazol-5-yl)ethyl phosphate + 4-amino-2-methyl-5-(diphosphooxymethyl)pyrimidine + 2 H(+) = thiamine phosphate + CO2 + diphosphate. It carries out the reaction 4-methyl-5-(2-phosphooxyethyl)-thiazole + 4-amino-2-methyl-5-(diphosphooxymethyl)pyrimidine + H(+) = thiamine phosphate + diphosphate. Its pathway is cofactor biosynthesis; thiamine diphosphate biosynthesis; thiamine phosphate from 4-amino-2-methyl-5-diphosphomethylpyrimidine and 4-methyl-5-(2-phosphoethyl)-thiazole: step 1/1. In terms of biological role, condenses 4-methyl-5-(beta-hydroxyethyl)thiazole monophosphate (THZ-P) and 2-methyl-4-amino-5-hydroxymethyl pyrimidine pyrophosphate (HMP-PP) to form thiamine monophosphate (TMP). This is Thiamine-phosphate synthase from Mycolicibacterium smegmatis (strain ATCC 700084 / mc(2)155) (Mycobacterium smegmatis).